The chain runs to 735 residues: Catalase-peroxidase (735 aa).

The span at 1 to 26 (MENQNRQNASQCPFHGSITNQSSNRT) shows a compositional bias: polar residues. Positions 1 to 29 (MENQNRQNASQCPFHGSITNQSSNRTTNK) are disordered. The tryptophyl-tyrosyl-methioninium (Trp-Tyr) (with M-249) cross-link spans 100–223 (WHSAGTYRIG…LAASVMGLIY (124 aa)). Histidine 101 serves as the catalytic Proton acceptor. Positions 223 to 249 (YVNPEGPDGKPDPKAAARDIRETFRRM) form a cross-link, tryptophyl-tyrosyl-methioninium (Tyr-Met) (with W-100). Histidine 264 is a binding site for heme b.

This sequence belongs to the peroxidase family. Peroxidase/catalase subfamily. Homodimer or homotetramer. Requires heme b as cofactor. Formation of the three residue Trp-Tyr-Met cross-link is important for the catalase, but not the peroxidase activity of the enzyme.

It carries out the reaction H2O2 + AH2 = A + 2 H2O. It catalyses the reaction 2 H2O2 = O2 + 2 H2O. Its function is as follows. Bifunctional enzyme with both catalase and broad-spectrum peroxidase activity. The chain is Catalase-peroxidase from Geobacillus thermodenitrificans (strain NG80-2).